The primary structure comprises 240 residues: Cell division control protein 14 (240 aa).

Interacts with sid1.

Its subcellular location is the cytoplasm. The protein localises to the cytoskeleton. It localises to the microtubule organizing center. It is found in the spindle pole body. In terms of biological role, has a role in the septation initiation network (SIN) required for cytokinesis. This chain is Cell division control protein 14 (cdc14), found in Schizosaccharomyces pombe (strain 972 / ATCC 24843) (Fission yeast).